A 200-amino-acid chain; its full sequence is Recombination protein RecR (200 aa).

The segment at 59-74 adopts a C4-type zinc-finger fold; the sequence is CDICGNVCESSPCPVC. Residues 82–177 enclose the Toprim domain; that stretch reads SVICVVEEPK…KVTRLASGLP (96 aa).

Belongs to the RecR family.

In terms of biological role, may play a role in DNA repair. It seems to be involved in an RecBC-independent recombinational process of DNA repair. It may act with RecF and RecO. The chain is Recombination protein RecR from Bifidobacterium longum (strain DJO10A).